We begin with the raw amino-acid sequence, 343 residues long: Protein RecA (343 aa).

66–73 (GPESSGKT) is a binding site for ATP.

The protein belongs to the RecA family.

The protein resides in the cytoplasm. Can catalyze the hydrolysis of ATP in the presence of single-stranded DNA, the ATP-dependent uptake of single-stranded DNA by duplex DNA, and the ATP-dependent hybridization of homologous single-stranded DNAs. It interacts with LexA causing its activation and leading to its autocatalytic cleavage. The chain is Protein RecA from Nitrosomonas europaea (strain ATCC 19718 / CIP 103999 / KCTC 2705 / NBRC 14298).